Here is a 349-residue protein sequence, read N- to C-terminus: Fructose-bisphosphate aldolase 2, chloroplastic (349 aa).

Positions 47 and 137 each coordinate substrate. E177 serves as the catalytic Proton acceptor. K219 acts as the Schiff-base intermediate with dihydroxyacetone-P in catalysis.

It belongs to the class I fructose-bisphosphate aldolase family.

It is found in the plastid. The protein resides in the chloroplast. The catalysed reaction is beta-D-fructose 1,6-bisphosphate = D-glyceraldehyde 3-phosphate + dihydroxyacetone phosphate. The protein operates within carbohydrate degradation; glycolysis; D-glyceraldehyde 3-phosphate and glycerone phosphate from D-glucose: step 4/4. This chain is Fructose-bisphosphate aldolase 2, chloroplastic, found in Pisum sativum (Garden pea).